A 268-amino-acid chain; its full sequence is Undecaprenyl-diphosphatase (268 aa).

Transmembrane regions (helical) follow at residues 41-61, 81-101, 106-126, 146-166, 191-211, 213-233, and 245-265; these read LAYS…LIYF, WLTY…PLYM, YLLL…AVIF, MTLG…LPGI, FVLV…SEGG, VATP…LVTI, and VTLV…TRIL.

This sequence belongs to the UppP family.

Its subcellular location is the cell membrane. It catalyses the reaction di-trans,octa-cis-undecaprenyl diphosphate + H2O = di-trans,octa-cis-undecaprenyl phosphate + phosphate + H(+). Functionally, catalyzes the dephosphorylation of undecaprenyl diphosphate (UPP). In Pyrobaculum islandicum (strain DSM 4184 / JCM 9189 / GEO3), this protein is Undecaprenyl-diphosphatase.